The sequence spans 430 residues: Adenylosuccinate synthetase (430 aa).

Residues 12–18 and 40–42 each bind GTP; these read GDEGKGK and GHT. Asp-13 serves as the catalytic Proton acceptor. Residues Asp-13 and Gly-40 each coordinate Mg(2+). IMP is bound by residues 13–16, 38–41, Thr-128, Arg-142, Gln-223, Thr-238, and Arg-302; these read DEGK and NAGH. His-41 functions as the Proton donor in the catalytic mechanism. 298-304 is a binding site for substrate; sequence TTTGRPR. Residues Arg-304, 330 to 332, and 412 to 414 contribute to the GTP site; these read SID and SVG.

This sequence belongs to the adenylosuccinate synthetase family. In terms of assembly, homodimer. Mg(2+) is required as a cofactor.

Its subcellular location is the cytoplasm. The catalysed reaction is IMP + L-aspartate + GTP = N(6)-(1,2-dicarboxyethyl)-AMP + GDP + phosphate + 2 H(+). It participates in purine metabolism; AMP biosynthesis via de novo pathway; AMP from IMP: step 1/2. In terms of biological role, plays an important role in the de novo pathway of purine nucleotide biosynthesis. Catalyzes the first committed step in the biosynthesis of AMP from IMP. The sequence is that of Adenylosuccinate synthetase from Streptococcus uberis (strain ATCC BAA-854 / 0140J).